The sequence spans 375 residues: Alcohol dehydrogenase B (375 aa).

7 residues coordinate Zn(2+): C40, H62, C92, C95, C98, C106, and C169.

It belongs to the zinc-containing alcohol dehydrogenase family. It depends on Zn(2+) as a cofactor.

It localises to the cytoplasm. It catalyses the reaction a primary alcohol + NAD(+) = an aldehyde + NADH + H(+). The enzyme catalyses a secondary alcohol + NAD(+) = a ketone + NADH + H(+). This Mycobacterium bovis (strain ATCC BAA-935 / AF2122/97) protein is Alcohol dehydrogenase B (adhB).